Reading from the N-terminus, the 591-residue chain is ADP-ribosylating toxin CARDS (591 aa).

The tract at residues 1 to 205 is mono-ADP ribosyltransferase (mART) domain; that stretch reads MPNPVRFVYR…LPTPGIATPV (205 aa). The NAD(+)-binding pocket stretch occupies residues 206–256; sequence HLSIPQAASVADVSEGTSASLSFACPDWSPPSSNGENPLDKCIAEKIDNYN. A disulfide bond links Cys-230 and Cys-247. The KELED motif, involved in host ER trafficking, solvent exposed in the crystal structure signature appears at 268 to 272; that stretch reads KELED. Residues 273–439 are D2 domain; that stretch reads TPVYLRGIKT…QFVTMRAAST (167 aa). Positions 440-591 are D3 domain; the sequence is FFVDVQLGWY…ILVKDGFDRF (152 aa).

It belongs to the bacterial exotoxin subunit A family. As to quaternary structure, monomer. Binds to host (human) pulmonary surfactant-associated protein A1 (SFTPA1), the major mammalian protein component of pulmonary surfactant. Binds to host (human) surface annexin A2 (ANXA2) on the cell surface; anti-ANXA2 antibodies decrease binding to cells. Interacts with cytosolic host (human) NLRP3, which it ADP-ribosylates in vitro. 8 hours after treatment of HeLa cells with purified protein, a substantial amount is processed to 2 nearly equal-sized fragments. The disulfide bond between Cys-230 and Cys-247 is required to for the toxin to exert its mART and vacuolating activities within target cells, and for protein processing. Acidic pH in the endosome and retrograde transport are required for toxin cleavage, which is required for both toxin activities. Trypsin treatment under mild conditions leads to cleavage at Lys-305 and Lys-307; the 2 proteins fragments remain associated and can be internalized and vacuolate HeLa cells.

It localises to the cell membrane. It is found in the cytoplasm. The protein resides in the cell surface. Its subcellular location is the cell projection. The protein localises to the attachment organelle. It localises to the host cytoplasm. It is found in the host cytosol. The protein resides in the host endoplasmic reticulum. With respect to regulation, in vitro ADP-ribosylation is enhanced by dithiotheritol. In terms of biological role, the main virulence factor for this bacteria, a mono-ADP-ribosylating toxin (mART), that transfers the ADP-ribosyl group from NAD(+) to multiple target proteins in vitro. Also elicits cytopathic effects in mammalian cells, such as disorganization and disruption of respiratory epithelial integrity in tracheal epithelium and vacuolization in the cytoplasm of CHO and HeLa cells as well as in mice and baboons. Treatment of mice or baboons with CARDS elicits a response that is consistent with human M.pneumoniae infections and mouse models of both infection and intoxication, suggesting that CARDS toxin is sufficient to cause prolonged inflammatory responses and airway dysfunction. Treatment of baboons with CARDS induces a number of cytokines; G-CSF (40 fold), IL-1Ra (10 fold), IL-6 and IL-8 (333 and 100 fold, respectively), MIP-1a (5 fold), and RANTES (9 fold). Treatment of mice gives a similar response. Binds phosphatidyl choline, dipalmitoylphosphatidylcholine (DPPC) and sphingomyelin via domains D2 plus D3. Functionally, has at least 2 host receptors SFTPA1 and ANXA2. Internalized by a clathrin-mediated process; protein is rapidly taken up at 37 degrees Celsius. Clathrin-independent or caveolin-dependent endocytosis were not detected. In HeLa cells internalized CARDS trafficks toward the nucleus by retrograde transport from early to late endosomes, then the Golgi apparatus; at 16 hours most toxin is concentrated in the perinuclear region in the host endoplasmic reticulum (ER). Failure to localize to the host ER prevents ADP-ribosylation and vacuolization. An acidic compartment is required to mediate retrotransport and processing of toxin into an N-terminal fragment with mART activity and a C-terminal fragment that is able to induce vacuolization. Its function is as follows. Induces the host NLRP3 inflammasome to release interleukin-1 beta (IL-1 beta); IL-1 beta release requires ADP-ribosylation activity and uptake by host macrophages. In the host colocalizes with the NLRP3 inflammasome; ADP-ribosylates NLRP3 in vitro. ADP-ribosylation of NLRP3 may lead to hyperinflammation. This Mycoplasma pneumoniae (strain ATCC 29342 / M129 / Subtype 1) (Mycoplasmoides pneumoniae) protein is ADP-ribosylating toxin CARDS.